The primary structure comprises 312 residues: Glycine--tRNA ligase alpha subunit (312 aa).

This sequence belongs to the class-II aminoacyl-tRNA synthetase family. In terms of assembly, tetramer of two alpha and two beta subunits.

It localises to the cytoplasm. The catalysed reaction is tRNA(Gly) + glycine + ATP = glycyl-tRNA(Gly) + AMP + diphosphate. The chain is Glycine--tRNA ligase alpha subunit from Nostoc punctiforme (strain ATCC 29133 / PCC 73102).